Here is a 331-residue protein sequence, read N- to C-terminus: 5-dehydro-2-deoxygluconokinase (331 aa).

Belongs to the carbohydrate kinase PfkB family.

The enzyme catalyses 5-dehydro-2-deoxy-D-gluconate + ATP = 6-phospho-5-dehydro-2-deoxy-D-gluconate + ADP + H(+). Its pathway is polyol metabolism; myo-inositol degradation into acetyl-CoA; acetyl-CoA from myo-inositol: step 5/7. Catalyzes the phosphorylation of 5-dehydro-2-deoxy-D-gluconate (2-deoxy-5-keto-D-gluconate or DKG) to 6-phospho-5-dehydro-2-deoxy-D-gluconate (DKGP). The protein is 5-dehydro-2-deoxygluconokinase of Halalkalibacterium halodurans (strain ATCC BAA-125 / DSM 18197 / FERM 7344 / JCM 9153 / C-125) (Bacillus halodurans).